The following is a 206-amino-acid chain: Small ribosomal subunit protein uS4 (206 aa).

The segment at 28 to 52 (YLDRRPYAPGQHGQRRGRGRPSDYS) is disordered. One can recognise an S4 RNA-binding domain in the interval 96–171 (RRLDNVVFRM…QKRRRVSPWI (76 aa)).

It belongs to the universal ribosomal protein uS4 family. As to quaternary structure, part of the 30S ribosomal subunit. Contacts protein S5. The interaction surface between S4 and S5 is involved in control of translational fidelity.

One of the primary rRNA binding proteins, it binds directly to 16S rRNA where it nucleates assembly of the body of the 30S subunit. In terms of biological role, with S5 and S12 plays an important role in translational accuracy. In Deinococcus geothermalis (strain DSM 11300 / CIP 105573 / AG-3a), this protein is Small ribosomal subunit protein uS4.